The primary structure comprises 602 residues: Sodium-independent sulfate anion transporter (602 aa).

The Extracellular segment spans residues 1-47; sequence MSPPMSPMKPPKGFAPMSCCWSTETMQKWLPFLGWLPDYTWYALKMD. A helical transmembrane segment spans residues 48 to 68; the sequence is FIAGISVGLTVIPQALAYAEV. Alanine 69 is a topological domain (cytoplasmic). Residues 70–90 traverse the membrane as a helical segment; the sequence is GLPPQYGLYSAFMGCFVYFFL. Residues 91 to 115 are Extracellular-facing; that stretch reads GTSRDVTLGPTAIMSLLVSFYTFHE. A helical membrane pass occupies residues 116 to 136; sequence PAYAVLLAFLTGCIQLGMGFL. Over 137–143 the chain is Cytoplasmic; that stretch reads RLGLLLD. Residues 144-164 traverse the membrane as a helical segment; it reads FISCPVIKGFTSAAAIIIGFG. The Extracellular segment spans residues 165–193; it reads QIKNLLGLQHIPRQFFLQVYYTFHNIGET. A helical membrane pass occupies residues 194–214; that stretch reads RVGDAVLGLVCMVLLLVLKLM. Topologically, residues 215–246 are cytoplasmic; the sequence is RDHVPPVHPEMPTGVRLSHGLVWTATTARNAL. Residues 247–267 form a helical membrane-spanning segment; sequence VVSFAALVAYSFQVTGYQPFV. Topologically, residues 268-300 are extracellular; that stretch reads LTGKTPEGLPDAHIPPFSVTTANGTISFTEMVQ. Residues 301 to 321 traverse the membrane as a helical segment; that stretch reads GMGAGLVVVPLMGLLESIAVA. Topologically, residues 322 to 337 are cytoplasmic; it reads KSFASQNNYRINSNQE. A helical transmembrane segment spans residues 338-358; it reads LLALGFTNILGSLFSSYPVTG. Over 359 to 370 the chain is Extracellular; that stretch reads SFGRTAVNAQSG. A helical transmembrane segment spans residues 371–391; the sequence is VCTPAGGLMTGALVLLSLDYL. At 392–394 the chain is on the cytoplasmic side; sequence TSL. Residues 395–415 traverse the membrane as a helical segment; the sequence is FYYIPKSALAAVIIMAVVPLF. Over 416–438 the chain is Extracellular; it reads DTKIVKTLWRVKRLDLLPLCVTF. The helical transmembrane segment at 439–459 threads the bilayer; sequence LLCFWEVQYGILAGTLVSVLI. Residues 460–602 lie on the Cytoplasmic side of the membrane; that stretch reads LLHSVARPKI…PEHKIALLKA (143 aa). The STAS domain occupies 466-580; it reads RPKIQVSEGP…EAEKYLKQEP (115 aa).

The protein belongs to the SLC26A/SulP transporter (TC 2.A.53) family.

The protein localises to the cell membrane. Its subcellular location is the lysosome membrane. The protein resides in the apical cell membrane. It localises to the basolateral cell membrane. It carries out the reaction hydrogencarbonate(in) + chloride(out) = hydrogencarbonate(out) + chloride(in). The enzyme catalyses sulfate(in) + H(+)(in) = sulfate(out) + H(+)(out). It catalyses the reaction oxalate(in) + chloride(out) = oxalate(out) + chloride(in). Sodium-independent anion exchanger mediating bicarbonate, chloride, sulfate and oxalate transport. Exhibits sodium-independent sulfate anion transporter activity that may cooperate with SLC26A2 to mediate DIDS-sensitive sulfate uptake into high endothelial venules endothelial cells (HEVEC). In the kidney, mediates chloride-bicarbonate exchange, facilitating V-ATPase-mediated acid secretion. May function as a chloride channel, playing an important role in moderating chloride homeostasis and neuronal activity in the cerebellum. The chain is Sodium-independent sulfate anion transporter from Bos taurus (Bovine).